A 67-amino-acid chain; its full sequence is Conotoxin VnMMSK-03 (67 aa).

Residues 1-20 form the signal peptide; sequence MMSKLGVVLTICLLPFPLTA. The propeptide occupies 21-50; it reads LPMDGDQPADLPALRTQDFEPERSPWFDPV. Disulfide bonds link C53/C65, C54/C61, and C58/C64. At P63 the chain carries 4-hydroxyproline.

This sequence belongs to the conotoxin M superfamily. As to expression, expressed by the venom duct.

The protein localises to the secreted. The sequence is that of Conotoxin VnMMSK-03 from Conus ventricosus (Mediterranean cone).